Reading from the N-terminus, the 334-residue chain is Ketol-acid reductoisomerase (NADP(+)) (334 aa).

The KARI N-terminal Rossmann domain occupies 2 to 181 (TKVYYDQSVE…GATRAGVIET (180 aa)). NADP(+) contacts are provided by residues 25 to 28 (YGSQ), Arg-48, Ser-52, and 82 to 85 (DEIQ). His-107 is a catalytic residue. Position 133 (Gly-133) interacts with NADP(+). Residues 182 to 327 (TFKEETETDL…RELRKMMPFI (146 aa)) enclose the KARI C-terminal knotted domain. Asp-190, Glu-194, Glu-226, and Glu-230 together coordinate Mg(2+). Ser-251 contributes to the substrate binding site.

The protein belongs to the ketol-acid reductoisomerase family. It depends on Mg(2+) as a cofactor.

The catalysed reaction is (2R)-2,3-dihydroxy-3-methylbutanoate + NADP(+) = (2S)-2-acetolactate + NADPH + H(+). The enzyme catalyses (2R,3R)-2,3-dihydroxy-3-methylpentanoate + NADP(+) = (S)-2-ethyl-2-hydroxy-3-oxobutanoate + NADPH + H(+). Its pathway is amino-acid biosynthesis; L-isoleucine biosynthesis; L-isoleucine from 2-oxobutanoate: step 2/4. It functions in the pathway amino-acid biosynthesis; L-valine biosynthesis; L-valine from pyruvate: step 2/4. In terms of biological role, involved in the biosynthesis of branched-chain amino acids (BCAA). Catalyzes an alkyl-migration followed by a ketol-acid reduction of (S)-2-acetolactate (S2AL) to yield (R)-2,3-dihydroxy-isovalerate. In the isomerase reaction, S2AL is rearranged via a Mg-dependent methyl migration to produce 3-hydroxy-3-methyl-2-ketobutyrate (HMKB). In the reductase reaction, this 2-ketoacid undergoes a metal-dependent reduction by NADPH to yield (R)-2,3-dihydroxy-isovalerate. The polypeptide is Ketol-acid reductoisomerase (NADP(+)) (Staphylococcus haemolyticus (strain JCSC1435)).